The chain runs to 450 residues: ATP-dependent protease ATPase subunit HslU (450 aa).

ATP is bound by residues V29, 71 to 76, D261, E328, and R400; that span reads GVGKTE.

This sequence belongs to the ClpX chaperone family. HslU subfamily. In terms of assembly, a double ring-shaped homohexamer of HslV is capped on each side by a ring-shaped HslU homohexamer. The assembly of the HslU/HslV complex is dependent on binding of ATP.

It is found in the cytoplasm. Its function is as follows. ATPase subunit of a proteasome-like degradation complex; this subunit has chaperone activity. The binding of ATP and its subsequent hydrolysis by HslU are essential for unfolding of protein substrates subsequently hydrolyzed by HslV. HslU recognizes the N-terminal part of its protein substrates and unfolds these before they are guided to HslV for hydrolysis. This chain is ATP-dependent protease ATPase subunit HslU, found in Rickettsia felis (strain ATCC VR-1525 / URRWXCal2) (Rickettsia azadi).